Consider the following 337-residue polypeptide: Protein EXORDIUM-like 3 (337 aa).

Residues Met1 to Gly25 form the signal peptide. 3 N-linked (GlcNAc...) asparagine glycosylation sites follow: Asn34, Asn66, and Asn119.

It belongs to the EXORDIUM family.

It localises to the secreted. It is found in the extracellular space. Its subcellular location is the apoplast. May play a role in a brassinosteroid-dependent regulation of growth and development. The protein is Protein EXORDIUM-like 3 (EXL3) of Arabidopsis thaliana (Mouse-ear cress).